A 249-amino-acid polypeptide reads, in one-letter code: Neurotrophic factor BDNF precursor form (249 aa).

Positions 1–18 (MTILFLTMVISYFGCMKA) are cleaved as a signal peptide. Positions 19 to 130 (APMKEANVHG…AANMSMRVRR (112 aa)) are excised as a propeptide. The N-linked (GlcNAc...) asparagine glycan is linked to N123. Intrachain disulfides connect C143–C210, C188–C239, and C198–C241.

The protein belongs to the NGF-beta family. In terms of assembly, monomers and homodimers. Binds to NTRK2/TRKB. Can form heterodimers with other neurotrophin family members, such as NTF3 and NTF4 (in vitro), but the physiological relevance of this is not clear. BDNF precursor form: interacts with the heterodimer formed by NGFR and SORCS2. Mature BDNF has much lower affinity for the heterodimer formed by NGFR and SORCS2. N-glycosylated and glycosulfated, contrary to mature BDNF. Post-translationally, mature BDNF is produced by proteolytic removal of the propeptide, catalyzed by a FURIN family member. In addition, the precursor form is proteolytically cleaved within the propeptide, but this is not an obligatory intermediate for the production of mature BDNF. Can be converted into mature BDNF by plasmin (PLG).

It is found in the secreted. Important signaling molecule that activates signaling cascades downstream of NTRK2. During development, promotes the survival and differentiation of selected neuronal populations of the peripheral and central nervous systems. Participates in axonal growth, pathfinding and in the modulation of dendritic growth and morphology. Major regulator of synaptic transmission and plasticity at adult synapses in many regions of the CNS. The versatility of BDNF is emphasized by its contribution to a range of adaptive neuronal responses including long-term potentiation (LTP), long-term depression (LTD), certain forms of short-term synaptic plasticity, as well as homeostatic regulation of intrinsic neuronal excitability. Its function is as follows. Important signaling molecule that activates signaling cascades downstream of NTRK2. Activates signaling cascades via the heterodimeric receptor formed by NGFR and SORCS2. Signaling via NGFR and SORCS2 plays a role in synaptic plasticity and long-term depression (LTD). Binding to NGFR and SORCS2 promotes neuronal apoptosis. Promotes neuronal growth cone collapse. This chain is Neurotrophic factor BDNF precursor form (Bdnf), found in Rattus norvegicus (Rat).